The primary structure comprises 68 residues: Large ribosomal subunit protein uL29 (68 aa).

Positions 32 to 68 are disordered; that stretch reads QDQLKRRTGSLDNPAERTQHRRDLARVLTVLTQKTKA. Positions 45–56 are enriched in basic and acidic residues; it reads PAERTQHRRDLA.

The protein belongs to the universal ribosomal protein uL29 family.

This Myxococcus xanthus (strain DK1622) protein is Large ribosomal subunit protein uL29.